The chain runs to 342 residues: Flotillin-like protein FloA (342 aa).

The next 2 membrane-spanning stretches (helical) occupy residues 18-38 (FFIF…GKFI) and 39-59 (SLWF…IIGM).

The protein belongs to the flotillin-like FloA family. As to quaternary structure, homooligomerizes.

It localises to the cell membrane. The protein resides in the membrane raft. Found in functional membrane microdomains (FMM) that may be equivalent to eukaryotic membrane rafts. FMMs are highly dynamic and increase in number as cells age. Flotillins are thought to be important factors in membrane fluidity. The sequence is that of Flotillin-like protein FloA from Protochlamydia amoebophila (strain UWE25).